The chain runs to 370 residues: S-adenosylmethionine decarboxylase proenzyme (370 aa).

F28 is a substrate binding site. Catalysis depends on residues E29 and E32. E85 contributes to the substrate binding site. The Schiff-base intermediate with substrate; via pyruvic acid role is filled by S86. At S86 the chain carries Pyruvic acid (Ser); by autocatalysis. C100 acts as the Proton donor; for catalytic activity in catalysis. Residues S250 and H263 each act as proton acceptor; for processing activity in the active site. E267 is a binding site for substrate.

It belongs to the eukaryotic AdoMetDC family. As to quaternary structure, forms a heterodimer with catalytically inactive AdoMetDC prozyme; heterodimerization is required to activate AdoMetDC. The cofactor is pyruvate. Post-translationally, is synthesized initially as an inactive proenzyme. Formation of the active enzyme involves a self-maturation process in which the active site pyruvoyl group is generated from an internal serine residue via an autocatalytic post-translational modification. Two non-identical subunits are generated from the proenzyme in this reaction, and the pyruvate is formed at the N-terminus of the alpha chain, which is derived from the carboxyl end of the proenzyme. The post-translation cleavage follows an unusual pathway, termed non-hydrolytic serinolysis, in which the side chain hydroxyl group of the serine supplies its oxygen atom to form the C-terminus of the beta chain, while the remainder of the serine residue undergoes an oxidative deamination to the alpha chain.

The enzyme catalyses S-adenosyl-L-methionine + H(+) = S-adenosyl 3-(methylsulfanyl)propylamine + CO2. Its pathway is amine and polyamine biosynthesis; S-adenosylmethioninamine biosynthesis; S-adenosylmethioninamine from S-adenosyl-L-methionine: step 1/1. Allosterically activated by AdoMetDC prozyme. Activated by putrescine. Inhibited by spermine and methylglyoxal-bis(guanylhydrazone) (MGBG) and slightly by spermidine. Inhibited by 5'-([(Z)-4-amino-2-butenyl]methylamino)-5'-deoxyadenosine (MDL 73811). Its function is as follows. Probably in association with catalytically inactive AdoMetDC prozyme, catalyzes the decarboxylation of S-adenosyl-L-methionine which is essential for the biosynthesis of the polyamine spermidine. Required for growth and survival during the bloodstream life cycle stage. This chain is S-adenosylmethionine decarboxylase proenzyme, found in Trypanosoma cruzi.